The primary structure comprises 115 residues: Large ribosomal subunit protein bL19 (115 aa).

It belongs to the bacterial ribosomal protein bL19 family.

Its function is as follows. This protein is located at the 30S-50S ribosomal subunit interface and may play a role in the structure and function of the aminoacyl-tRNA binding site. The chain is Large ribosomal subunit protein bL19 from Salmonella choleraesuis (strain SC-B67).